An 82-amino-acid polypeptide reads, in one-letter code: Mu-conotoxin GVIIJ (82 aa).

An N-terminal signal peptide occupies residues 1–22 (MKLTCVVIVAALLLTACQLITA). The propeptide occupies 23 to 47 (LDCGGTQKHRALRSTIKLSLLRQHR). Tryptophan 49 carries the 6'-bromotryptophan modification. 3 cysteine pairs are disulfide-bonded: cysteine 50–cysteine 65, cysteine 57–cysteine 69, and cysteine 64–cysteine 76. Proline 53 carries the 4-hydroxyproline modification. Cysteine 71 is a binding site for a protein.

The protein belongs to the conotoxin O1 superfamily. Post-translationally, cys-71 is a key residue that tethers to the channel by covalent attachment, leading to nearly irreversible inhibition (k(off) very low). In order to determine the solution structure without dimerization, this residue was mutated to Cys. Expressed by the venom duct.

It localises to the secreted. Functionally, mu-conotoxins block voltage-gated sodium channels (Nav). This toxin (GVIIJ(SSG)) blocks Nav1.1/SCN1A (Kd=11 nM), Nav1.2/SCN2A (Kd=11 nM), Nav1.3/SCN3A (Kd=15 nM), Nav1.4/SCN4A (Kd=4.7 nM), Nav1.6/SCN8A (Kd=360 nM) and Nav1.7/SCN9A (Kd=41 nM). It binds the channel at the newly described site 8, which is composed by two surfaces whose one contains a non-disulfide-bonded cysteine (which is free to covalently bind the toxin Cys-71). It is noteworthy that coexpression of subunits beta-2 or beta-4 (but not beta-1 or beta-3) protects rNav1.1-1.7 against block by the toxin, since these subunits (thanks to their extracellular domain) covalently bind to the key cysteine of the channel, thus preventing the covalent binding of the toxin. This chain is Mu-conotoxin GVIIJ, found in Conus geographus (Geography cone).